Here is a 148-residue protein sequence, read N- to C-terminus: Nucleoside diphosphate kinase (148 aa).

6 residues coordinate ATP: lysine 9, phenylalanine 57, arginine 85, threonine 91, arginine 102, and asparagine 112. Threonine 91 is modified (phosphothreonine). The Pros-phosphohistidine intermediate role is filled by histidine 115. Serine 122 is subject to Phosphoserine.

It belongs to the NDK family. As to quaternary structure, homotetramer. Mg(2+) serves as cofactor.

The protein localises to the cytoplasm. It catalyses the reaction a 2'-deoxyribonucleoside 5'-diphosphate + ATP = a 2'-deoxyribonucleoside 5'-triphosphate + ADP. The catalysed reaction is a ribonucleoside 5'-diphosphate + ATP = a ribonucleoside 5'-triphosphate + ADP. In terms of biological role, major role in the synthesis of nucleoside triphosphates other than ATP. The ATP gamma phosphate is transferred to the NDP beta phosphate via a ping-pong mechanism, using a phosphorylated active-site intermediate. This Bacillus licheniformis (strain ATCC 14580 / DSM 13 / JCM 2505 / CCUG 7422 / NBRC 12200 / NCIMB 9375 / NCTC 10341 / NRRL NRS-1264 / Gibson 46) protein is Nucleoside diphosphate kinase.